Consider the following 364-residue polypeptide: V-type proton ATPase subunit d (364 aa).

It belongs to the V-ATPase V0D/AC39 subunit family. As to quaternary structure, V-ATPase is a heteromultimeric enzyme composed of a peripheral catalytic V1 complex (components A to H) attached to an integral membrane V0 proton pore complex (components: a, c, c', c'', d, e, f and VOA1).

The protein resides in the vacuole membrane. In terms of biological role, subunit of the V0 complex of vacuolar(H+)-ATPase (V-ATPase), a multisubunit enzyme composed of a peripheral complex (V1) that hydrolyzes ATP and a membrane integral complex (V0) that translocates protons. V-ATPase is responsible for acidifying and maintaining the pH of intracellular compartments. This subunit is a non-integral membrane component of the membrane pore domain and is required for proper assembly of the V0 sector. Might be involved in the regulated assembly of V1 subunits onto the membrane sector or alternatively may prevent the passage of protons through V0 pores. The chain is V-type proton ATPase subunit d from Neurospora crassa (strain ATCC 24698 / 74-OR23-1A / CBS 708.71 / DSM 1257 / FGSC 987).